The chain runs to 520 residues: Peptide chain release factor 3 (520 aa).

Positions Glu-8–Thr-277 constitute a tr-type G domain. Residues Ser-17 to Thr-24, Asp-85 to His-89, and Asn-139 to Asp-142 each bind GTP.

It belongs to the TRAFAC class translation factor GTPase superfamily. Classic translation factor GTPase family. PrfC subfamily.

It is found in the cytoplasm. Functionally, increases the formation of ribosomal termination complexes and stimulates activities of RF-1 and RF-2. It binds guanine nucleotides and has strong preference for UGA stop codons. It may interact directly with the ribosome. The stimulation of RF-1 and RF-2 is significantly reduced by GTP and GDP, but not by GMP. This is Peptide chain release factor 3 from Staphylococcus haemolyticus (strain JCSC1435).